The chain runs to 193 residues: Xanthine phosphoribosyltransferase (193 aa).

Residues L20 and T27 each contribute to the xanthine site. 128-132 (ANGQA) lines the 5-phospho-alpha-D-ribose 1-diphosphate pocket. Residue K156 participates in xanthine binding.

It belongs to the purine/pyrimidine phosphoribosyltransferase family. Xpt subfamily. Homodimer.

Its subcellular location is the cytoplasm. The catalysed reaction is XMP + diphosphate = xanthine + 5-phospho-alpha-D-ribose 1-diphosphate. It participates in purine metabolism; XMP biosynthesis via salvage pathway; XMP from xanthine: step 1/1. In terms of biological role, converts the preformed base xanthine, a product of nucleic acid breakdown, to xanthosine 5'-monophosphate (XMP), so it can be reused for RNA or DNA synthesis. The chain is Xanthine phosphoribosyltransferase from Streptococcus equi subsp. equi (strain 4047).